The following is a 134-amino-acid chain: MSWQAYVDDHLMCEVEGNPGQTLTAAAIIGHDGSVWAQSSTFPQIKPEEIAGIMKDFDEPGHLAPTGLYLGGAKYMVIQGEPNAVIRGKKGSGGVTIKKTGQALVFGVYDEPVTPGQCNVIVERLGDYLIDQGL.

This sequence belongs to the profilin family. As to quaternary structure, occurs in many kinds of cells as a complex with monomeric actin in a 1:1 ratio.

It is found in the cytoplasm. It localises to the cytoskeleton. Binds to actin and affects the structure of the cytoskeleton. At high concentrations, profilin prevents the polymerization of actin, whereas it enhances it at low concentrations. By binding to PIP2, it inhibits the formation of IP3 and DG. The sequence is that of Profilin from Apium graveolens (Celery).